The following is a 111-amino-acid chain: SPbeta prophage-derived uncharacterized protein YolC (111 aa).

The N-terminal stretch at 1 to 25 is a signal peptide; sequence MKKRLIGFLVLVPALIMSGITLIEA.

This Bacillus subtilis (strain 168) protein is SPbeta prophage-derived uncharacterized protein YolC (yolC).